The primary structure comprises 431 residues: Pachytene checkpoint protein 2 homolog (431 aa).

Met-1 is subject to N-acetylmethionine. Position 179-186 (179-186 (GPPGTGKT)) interacts with ATP.

The protein belongs to the AAA ATPase family. PCH2 subfamily. Specifically interacts with the ligand binding domain of the thyroid receptor (TR). This interaction does not require the presence of thyroid hormone for its interaction. Interacts with proteasome subunit PSMA8; to participate in meiosis progression during spermatogenesis.

In terms of biological role, plays a key role in chromosome recombination and chromosome structure development during meiosis. Required at early steps in meiotic recombination that leads to non-crossovers pathways. Also needed for efficient completion of homologous synapsis by influencing crossover distribution along the chromosomes affecting both crossovers and non-crossovers pathways. Also required for development of higher-order chromosome structures and is needed for synaptonemal-complex formation. In males, required for efficient synapsis of the sex chromosomes and for sex body formation. Promotes early steps of the DNA double-strand breaks (DSBs) repair process upstream of the assembly of RAD51 complexes. Required for depletion of HORMAD1 and HORMAD2 from synapsed chromosomes. Plays a role in mitotic spindle assembly checkpoint (SAC) activation. The chain is Pachytene checkpoint protein 2 homolog (TRIP13) from Sus scrofa (Pig).